The following is a 156-amino-acid chain: Endoribonuclease YbeY (156 aa).

The Zn(2+) site is built by His122, His126, and His132.

This sequence belongs to the endoribonuclease YbeY family. It depends on Zn(2+) as a cofactor.

Its subcellular location is the cytoplasm. Its function is as follows. Single strand-specific metallo-endoribonuclease involved in late-stage 70S ribosome quality control and in maturation of the 3' terminus of the 16S rRNA. This chain is Endoribonuclease YbeY, found in Bacillus cytotoxicus (strain DSM 22905 / CIP 110041 / 391-98 / NVH 391-98).